Here is a 354-residue protein sequence, read N- to C-terminus: Sulfate/thiosulfate import ATP-binding protein CysA 2 (354 aa).

Residues 3–237 (IHIQQVNKHF…PSNPFVYEFL (235 aa)) enclose the ABC transporter domain. 35-42 (GPSGSGKT) is an ATP binding site.

It belongs to the ABC transporter superfamily. Sulfate/tungstate importer (TC 3.A.1.6) family. In terms of assembly, the complex is composed of two ATP-binding proteins (CysA), two transmembrane proteins (CysT and CysW) and a solute-binding protein (CysP).

It localises to the cell inner membrane. It catalyses the reaction sulfate(out) + ATP + H2O = sulfate(in) + ADP + phosphate + H(+). The catalysed reaction is thiosulfate(out) + ATP + H2O = thiosulfate(in) + ADP + phosphate + H(+). Part of the ABC transporter complex CysAWTP involved in sulfate/thiosulfate import. Responsible for energy coupling to the transport system. In Shewanella oneidensis (strain ATCC 700550 / JCM 31522 / CIP 106686 / LMG 19005 / NCIMB 14063 / MR-1), this protein is Sulfate/thiosulfate import ATP-binding protein CysA 2.